Consider the following 344-residue polypeptide: L-lactate dehydrogenase B (344 aa).

NAD(+) is bound by residues 62–67 (DALPDK) and R109. R116, N148, and R179 together coordinate substrate. NAD(+) is bound at residue N148. The active-site Proton acceptor is H203. T258 is a substrate binding site.

It belongs to the LDH/MDH superfamily. LDH family. In terms of assembly, tetramer that arise from random association of LDH-A and LDH-B.

It carries out the reaction (S)-lactate + NAD(+) = pyruvate + NADH + H(+). It functions in the pathway fermentation; pyruvate fermentation to lactate; (S)-lactate from pyruvate: step 1/1. This Hordeum vulgare (Barley) protein is L-lactate dehydrogenase B.